Here is a 2839-residue protein sequence, read N- to C-terminus: Neurofibromin (2839 aa).

Residue Ala2 is modified to N-acetylalanine. 2 positions are modified to phosphoserine: Ser864 and Ser876. The Ras-GAP domain maps to 1251 to 1482 (HLLYQLLWNM…DAARRFFLDI (232 aa)). In terms of domain architecture, CRAL-TRIO spans 1580–1738 (EKEEFKALKT…ATLALEEDLK (159 aa)). The interval 1580–1837 (EKEEFKALKT…RTRWELSQPD (258 aa)) is lipid binding. 2 positions are modified to phosphoserine: Ser2188 and Ser2467. Thr2514 is subject to Phosphothreonine. Phosphoserine is present on residues Ser2515, Ser2521, Ser2523, and Ser2543. The Bipartite nuclear localization signal motif lies at 2555-2571 (KRQEMESGITTPPKMRR). A Phosphothreonine modification is found at Thr2565. Phosphoserine occurs at positions 2597, 2802, and 2817. The interval 2787–2839 (TSQHSPGIDKENVELSPTTGHCNSGRTRHGSASQVQKQRSAGSFKRNSIKKIV) is disordered. The segment covering 2801 to 2827 (LSPTTGHCNSGRTRHGSASQVQKQRSA) has biased composition (polar residues).

In terms of assembly, interacts with HTR6. Interacts with SPRED2. In terms of processing, ubiquitinated by RNF7/RBX2, leading to its degradation. As to expression, detected in brain, peripheral nerve, lung, colon and muscle.

Its subcellular location is the nucleus. The protein resides in the nucleolus. The protein localises to the cell membrane. Functionally, stimulates the GTPase activity of Ras. NF1 shows greater affinity for Ras GAP, but lower specific activity. May be a regulator of Ras activity. The polypeptide is Neurofibromin (NF1) (Homo sapiens (Human)).